The sequence spans 262 residues: LCVLCLLPQSPALPLPREAGGHSESQWKQAQEYLKRFYPSDAKSRDADSFGAQLKEMQKFFRLPVTGMLDSRVIVVMQQPRCGLPDTGEDLPSRNRPKWISKVVTYRIISYTRDLPRVTVDHLVAKALNMWSKEIPLSFRRVVLGIPDIVIGFARGAHGDFYPFDGPGGTLAHAYEPGPGLGGDAHFDEDERWADGRGLGINFLAVATHELGHSLGLRHSSDPDSVMYPTYGARDSENFKLSPGDIREIQELYGKRSKSRKK.

The first 12 residues, 1–12 (LCVLCLLPQSPA), serve as a signal peptide directing secretion. Positions 13-89 (LPLPREAGGH…PRCGLPDTGE (77 aa)) are cleaved as a propeptide — activation peptide. Residues 80–87 (PRCGLPDT) carry the Cysteine switch motif. Cys82 contributes to the Zn(2+) binding site. Asp148 contacts Ca(2+). Residues His158 and Asp160 each contribute to the Zn(2+) site. Residues Asp165, Gly166, Gly168, and Thr170 each contribute to the Ca(2+) site. Residue His173 participates in Zn(2+) binding. Residues Gly180, Gly182, and Asp184 each contribute to the Ca(2+) site. His186 is a Zn(2+) binding site. Residues Asp188 and Glu191 each contribute to the Ca(2+) site. His209 contributes to the Zn(2+) binding site. Glu210 is an active-site residue. His213 and His219 together coordinate Zn(2+).

This sequence belongs to the peptidase M10A family. The cofactor is Ca(2+). Requires Zn(2+) as cofactor.

It is found in the secreted. The protein localises to the extracellular space. The protein resides in the extracellular matrix. The enzyme catalyses Cleavage of 14-Ala-|-Leu-15 and 16-Tyr-|-Leu-17 in B chain of insulin. No action on collagen types I, II, IV, V. Cleaves gelatin chain alpha2(I) &gt; alpha1(I).. Its function is as follows. Degrades casein, gelatins of types I, III, IV, and V, and fibronectin. Activates procollagenase. The sequence is that of Matrilysin (MMP7) from Felis catus (Cat).